Here is an 862-residue protein sequence, read N- to C-terminus: Interleukin-12 receptor subunit beta-2 (862 aa).

The signal sequence occupies residues M1 to A23. The Extracellular segment spans residues K24 to N622. N48, N129, N166, N195, and N271 each carry an N-linked (GlcNAc...) asparagine glycan. 5 Fibronectin type-III domains span residues Q126–I221, P226–E319, E320–A419, A423–A520, and P521–K620. The WSXWS motif motif lies at W305–S309. N-linked (GlcNAc...) asparagine glycans are attached at residues N347, N376, and N480. The helical transmembrane segment at W623–T643 threads the bilayer. Residues H644–L862 lie on the Cytoplasmic side of the membrane. The Box 1 motif signature appears at C662–A670. A disordered region spans residues N725–A755. Residues Q728–M744 are compositionally biased toward basic and acidic residues. The segment at T796 to L801 is required for STAT4 binding. Position 800 is a phosphotyrosine (Y800).

Belongs to the type I cytokine receptor family. Type 2 subfamily. Heterodimer/heterooligomer; disulfide-linked. The functional high affinity IL12 receptor is composed of I12RB1 and IL12RB2. Il12RB2 binds JAK2 (via its N-terminal) through a membrane-proximal region of the cytoplasmic domain. Interaction, in vitro and in vivo, with SOCS3 (via its SH2 domain) inhibits the STAT4-mediated activation. Binds STAT4 through a membrane-distal C-terminal region. Post-translationally, on IL12 binding, phosphorylated on C-terminal tyrosine residues by JAK2. Phosphorylation on Tyr-800 is required for STAT4 binding and activation, and for SOCS3 binding. As to expression, isoform 2 is expressed at similar levels in both naive and activated T-cells.

The protein localises to the membrane. In terms of biological role, receptor for interleukin-12. This subunit is the signaling component coupling to the JAK2/STAT4 pathway. Promotes the proliferation of T-cells as well as NK cells. Induces the promotion of T-cells towards the Th1 phenotype by strongly enhancing IFN-gamma production. The sequence is that of Interleukin-12 receptor subunit beta-2 (IL12RB2) from Homo sapiens (Human).